Reading from the N-terminus, the 500-residue chain is Glucose-1-phosphate adenylyltransferase large subunit, chloroplastic/amyloplastic (500 aa).

The transit peptide at 1–33 (RASPPSESRAPLRAPQRSATRQHQARQGPRRMC) directs the protein to the chloroplast. The tract at residues 1 to 47 (RASPPSESRAPLRAPQRSATRQHQARQGPRRMCNGGRGPPYWTAGVT) is disordered.

The protein belongs to the bacterial/plant glucose-1-phosphate adenylyltransferase family. Heterotetramer.

Its subcellular location is the plastid. The protein localises to the chloroplast. The protein resides in the amyloplast. The catalysed reaction is alpha-D-glucose 1-phosphate + ATP + H(+) = ADP-alpha-D-glucose + diphosphate. It functions in the pathway glycan biosynthesis; starch biosynthesis. Insensitive to 3'phosphoglycerate and orthophosphate. Functionally, this protein plays a role in synthesis of starch. It catalyzes the synthesis of the activated glycosyl donor, ADP-glucose from Glc-1-P and ATP. The polypeptide is Glucose-1-phosphate adenylyltransferase large subunit, chloroplastic/amyloplastic (AGA.7) (Triticum aestivum (Wheat)).